An 86-amino-acid polypeptide reads, in one-letter code: Large ribosomal subunit protein bL27 (86 aa).

The interval 1 to 24 (MAHKKGTGSTRNGRDSNSKRLGVK) is disordered.

The protein belongs to the bacterial ribosomal protein bL27 family.

This chain is Large ribosomal subunit protein bL27, found in Prochlorococcus marinus (strain MIT 9312).